The primary structure comprises 156 residues: MAASLTLMTSPPCSRSSKSPSPSPSPSLSCNQQQQYKPLLHHQWPPQISLKKEKSNESIVAKSPVIAAATKGGSPSVQEQKWIHEGVITESLPNGMFWVKLDNCEDLVLGYISGRIRRSFIRVLPGDRVKIEVSRYDSTRGRITYRLRNNKDATTT.

The interval 1-35 (MAASLTLMTSPPCSRSSKSPSPSPSPSLSCNQQQQ) is disordered. The N-terminal 49 residues, 1 to 49 (MAASLTLMTSPPCSRSSKSPSPSPSPSLSCNQQQQYKPLLHHQWPPQIS), are a transit peptide targeting the chloroplast. A compositionally biased stretch (low complexity) spans 10–20 (SPPCSRSSKSP). The S1-like domain occupies 72 to 148 (GGSPSVQEQK…TRGRITYRLR (77 aa)).

It belongs to the IF-1 family. As to quaternary structure, component of the 30S ribosomal translation pre-initiation complex which assembles on the 30S ribosome in the order IF-2 and IF-3, IF-1 and N-formylmethionyl-tRNA(fMet); mRNA recruitment can occur at any time during PIC assembly.

It is found in the plastid. Its subcellular location is the chloroplast. Its function is as follows. One of the essential components for the initiation of protein synthesis. Stabilizes the binding of IF-2 and IF-3 on the 30S subunit to which N-formylmethionyl-tRNA(fMet) subsequently binds. Helps modulate mRNA selection, yielding the 30S pre-initiation complex (PIC). Upon addition of the 50S ribosomal subunit IF-1, IF-2 and IF-3 are released leaving the mature 70S translation initiation complex. In Mesembryanthemum crystallinum (Common ice plant), this protein is Translation initiation factor IF-1, chloroplastic (infA).